The chain runs to 324 residues: Lactonase drp35 (324 aa).

The Ca(2+) site is built by Glu47, Ser109, Gly111, Asp129, Thr132, Tyr134, Asp137, Asn184, Asp235, and Ser236. Asp235 serves as the catalytic Proton donor.

This sequence belongs to the SMP-30/CGR1 family. Requires Ca(2+) as cofactor.

The protein localises to the cytoplasm. Functionally, exhibits lactonase activity. Acts in cells with perturbed membrane integrity and is possibly related to the membrane homeostasis. This is Lactonase drp35 (drp35) from Staphylococcus aureus (strain MRSA252).